A 354-amino-acid polypeptide reads, in one-letter code: Molybdenum import ATP-binding protein ModC (354 aa).

Residues 1 to 229 form the ABC transporter domain; sequence MLELDFEQQL…SALRLWLQKE (229 aa). Position 31-38 (31-38) interacts with ATP; sequence GLSGAGKT. A Mop domain is found at 289-354; it reads GSSIRNILAV…IKSVSFHRQL (66 aa).

It belongs to the ABC transporter superfamily. Molybdate importer (TC 3.A.1.8) family. In terms of assembly, the complex is composed of two ATP-binding proteins (ModC), two transmembrane proteins (ModB) and a solute-binding protein (ModA).

The protein resides in the cell inner membrane. The enzyme catalyses molybdate(out) + ATP + H2O = molybdate(in) + ADP + phosphate + H(+). In terms of biological role, part of the ABC transporter complex ModABC involved in molybdenum import. Responsible for energy coupling to the transport system. This chain is Molybdenum import ATP-binding protein ModC, found in Photorhabdus laumondii subsp. laumondii (strain DSM 15139 / CIP 105565 / TT01) (Photorhabdus luminescens subsp. laumondii).